The chain runs to 527 residues: T-complex protein 1 subunit delta (527 aa).

It belongs to the TCP-1 chaperonin family. Heterooligomeric complex of about 850 to 900 kDa that forms two stacked rings, 12 to 16 nm in diameter.

It is found in the cytoplasm. Its function is as follows. Molecular chaperone; assists the folding of proteins upon ATP hydrolysis. Known to play a role, in vitro, in the folding of actin and tubulin. The polypeptide is T-complex protein 1 subunit delta (CCT4) (Yarrowia lipolytica (strain CLIB 122 / E 150) (Yeast)).